Here is a 124-residue protein sequence, read N- to C-terminus: Glycine cleavage system H protein (124 aa).

Residues 22 to 104 (LIVTGISDHA…YGKGWIYKMK (83 aa)) enclose the Lipoyl-binding domain. N6-lipoyllysine is present on K63.

It belongs to the GcvH family. As to quaternary structure, the glycine cleavage system is composed of four proteins: P, T, L and H. Requires (R)-lipoate as cofactor.

In terms of biological role, the glycine cleavage system catalyzes the degradation of glycine. The H protein shuttles the methylamine group of glycine from the P protein to the T protein. This is Glycine cleavage system H protein from Acinetobacter baylyi (strain ATCC 33305 / BD413 / ADP1).